Consider the following 313-residue polypeptide: Ornithine carbamoyltransferase (313 aa).

Carbamoyl phosphate contacts are provided by residues 61–64 (STRT), Gln-88, Arg-112, and 139–142 (HPCQ). L-ornithine is bound by residues Asn-170, Asp-228, and 232-233 (SM). Carbamoyl phosphate-binding positions include 268-269 (CL) and Arg-296.

It belongs to the aspartate/ornithine carbamoyltransferase superfamily. OTCase family.

The protein resides in the cytoplasm. The enzyme catalyses carbamoyl phosphate + L-ornithine = L-citrulline + phosphate + H(+). It functions in the pathway amino-acid biosynthesis; L-arginine biosynthesis; L-arginine from L-ornithine and carbamoyl phosphate: step 1/3. Reversibly catalyzes the transfer of the carbamoyl group from carbamoyl phosphate (CP) to the N(epsilon) atom of ornithine (ORN) to produce L-citrulline. This chain is Ornithine carbamoyltransferase, found in Bordetella avium (strain 197N).